Here is a 197-residue protein sequence, read N- to C-terminus: MKTPDTCIQLIVGLGNPGNEYEHTRHNAGQDFVEELARDLGQPLSPTPKFFGHFSRLNINGKDVRLLVPTTYMNRSGQAVAAVCQFYKIPPEAVLVVHDELDLPPGKARLKIGGGHGGHNGLRDIISSLGNNKDFGRLRLGIGHPGNAKLVSNYVLKKAPSEEFNAIEDAIRAAQPHVADLAKGDWEKAMRELHSKT.

TRNA is bound at residue tyrosine 21. The active-site Proton acceptor is the histidine 26. TRNA contacts are provided by tyrosine 72, asparagine 74, and asparagine 120.

It belongs to the PTH family. In terms of assembly, monomer.

The protein localises to the cytoplasm. It carries out the reaction an N-acyl-L-alpha-aminoacyl-tRNA + H2O = an N-acyl-L-amino acid + a tRNA + H(+). Functionally, hydrolyzes ribosome-free peptidyl-tRNAs (with 1 or more amino acids incorporated), which drop off the ribosome during protein synthesis, or as a result of ribosome stalling. Its function is as follows. Catalyzes the release of premature peptidyl moieties from peptidyl-tRNA molecules trapped in stalled 50S ribosomal subunits, and thus maintains levels of free tRNAs and 50S ribosomes. The protein is Peptidyl-tRNA hydrolase of Saccharophagus degradans (strain 2-40 / ATCC 43961 / DSM 17024).